Here is an 830-residue protein sequence, read N- to C-terminus: Periplasmic nitrate reductase 2 (830 aa).

The tat-type signal signal peptide spans 1–31; that stretch reads MKVSRRKFIKAQAVASAAAAAGISIPISASN. The 57-residue stretch at 41-97 folds into the 4Fe-4S Mo/W bis-MGD-type domain; it reads ITWEKAPCRFCGTGCSVNVGTKEGKVVATHGDIKSPVNRGLNCVKGYFLSKIMYGKD. 4 residues coordinate [4Fe-4S] cluster: cysteine 48, cysteine 51, cysteine 55, and cysteine 83. Mo-bis(molybdopterin guanine dinucleotide) contacts are provided by residues lysine 85, glutamine 152, asparagine 177, cysteine 181, 245–249, 264–266, methionine 374, glutamine 378, asparagine 484, 510–511, lysine 533, aspartate 560, and 720–729; these read STFEH, QSD, SE, and TGRVIEHWHS. Tryptophan 796 serves as a coordination point for substrate. 2 residues coordinate Mo-bis(molybdopterin guanine dinucleotide): asparagine 804 and lysine 821.

Belongs to the prokaryotic molybdopterin-containing oxidoreductase family. NasA/NapA/NarB subfamily. As to quaternary structure, component of the periplasmic nitrate reductase NapAB complex composed of NapA and NapB. It depends on [4Fe-4S] cluster as a cofactor. Requires Mo-bis(molybdopterin guanine dinucleotide) as cofactor. In terms of processing, predicted to be exported by the Tat system. The position of the signal peptide cleavage has not been experimentally proven.

The protein resides in the periplasm. It carries out the reaction 2 Fe(II)-[cytochrome] + nitrate + 2 H(+) = 2 Fe(III)-[cytochrome] + nitrite + H2O. Functionally, catalytic subunit of the periplasmic nitrate reductase complex NapAB. Receives electrons from NapB and catalyzes the reduction of nitrate to nitrite. In Photobacterium profundum (strain SS9), this protein is Periplasmic nitrate reductase 2.